The chain runs to 251 residues: MTKTEKKLRHYITKAIADYKLLDKGDKVMLCLSGGKDSFGLLKVLHGLIEDKTYDIDLHVYTLDQSQPGWDDSQLRKYLDDLGVSYEIETKNTYGVIIDKVPEGKTYCSLCSRLRRGNIYRYAKEHKMDKIILGHHHDDLIQSLLMSILYQGQIKSMPPKFVTQDGENTVIRPMVLVQERDLIEFAKEENFPIIPCNLCGSQENLKRKKVKKLIQDLALENPKVPSNILNSLSNVLPSHLMDKNLLNSLEN.

The PP-loop motif motif lies at 33–38; sequence SGGKDS. Residues cysteine 108, cysteine 111, and cysteine 199 each coordinate [4Fe-4S] cluster.

It belongs to the TtcA family. Homodimer. Mg(2+) serves as cofactor. [4Fe-4S] cluster is required as a cofactor.

The protein resides in the cytoplasm. It catalyses the reaction cytidine(32) in tRNA + S-sulfanyl-L-cysteinyl-[cysteine desulfurase] + AH2 + ATP = 2-thiocytidine(32) in tRNA + L-cysteinyl-[cysteine desulfurase] + A + AMP + diphosphate + H(+). It participates in tRNA modification. Its function is as follows. Catalyzes the ATP-dependent 2-thiolation of cytidine in position 32 of tRNA, to form 2-thiocytidine (s(2)C32). The sulfur atoms are provided by the cysteine/cysteine desulfurase (IscS) system. The chain is tRNA-cytidine(32) 2-sulfurtransferase 2 from Francisella tularensis subsp. tularensis (strain WY96-3418).